The chain runs to 353 residues: Guanine nucleotide-binding protein alpha-1 subunit (353 aa).

The N-myristoyl glycine moiety is linked to residue glycine 2. Residue cysteine 3 is the site of S-palmitoyl cysteine attachment. Residues 32–353 (NEIKMLLLGA…QVNLRDCGLL (322 aa)) enclose the G-alpha domain. The tract at residues 35–48 (KMLLLGAGESGKST) is G1 motif. Positions 43, 44, 45, 46, 47, 48, 150, 175, 181, 203, 269, 270, 272, and 325 each coordinate GTP. Mg(2+) is bound at residue serine 47. A G2 motif region spans residues 173 to 181 (DVLRSRVKT). Threonine 181 is a Mg(2+) binding site. The tract at residues 196–205 (YKLFDVGGQR) is G3 motif. Residues 265-272 (ILFLNKID) form a G4 motif region. Residues 323-328 (TCATDT) are G5 motif.

Belongs to the G-alpha family. In terms of assembly, g proteins are composed of 3 units; alpha, beta and gamma. The alpha chain contains the guanine nucleotide binding site. The cofactor is Mg(2+).

Its function is as follows. Guanine nucleotide-binding proteins (G proteins) are involved as modulators or transducers in various transmembrane signaling systems. This Mycosarcoma maydis (Corn smut fungus) protein is Guanine nucleotide-binding protein alpha-1 subunit (GPA1).